The chain runs to 540 residues: Probable protein kinase UbiB (540 aa).

The helical transmembrane segment at 24–44 (LLFEQPLLPWWLASLRLLMPW) threads the bilayer. Residues 126–494 (RFDVEPLASA…RRRQGDRWAL (369 aa)) form the Protein kinase domain. ATP is bound by residues 132–140 (LASASVAQV) and Lys-154. Asp-289 serves as the catalytic Proton acceptor. The next 2 helical transmembrane spans lie at 496-516 (LLGA…AEAA) and 518-538 (LAAP…YLIV).

It belongs to the ABC1 family. UbiB subfamily.

The protein localises to the cell inner membrane. It functions in the pathway cofactor biosynthesis; ubiquinone biosynthesis [regulation]. Is probably a protein kinase regulator of UbiI activity which is involved in aerobic coenzyme Q (ubiquinone) biosynthesis. This chain is Probable protein kinase UbiB, found in Pseudomonas putida (strain GB-1).